The sequence spans 385 residues: Proteinase-activated receptor 4 (385 aa).

The signal sequence occupies residues 1 to 17; that stretch reads MWGRLLLWPLVLGFSLS. A propeptide spans 18 to 47 (removed for receptor activation); that stretch reads GGTQTPSVYDESGSTGGGDDSTPSILPAPR. Positions 21–42 are disordered; the sequence is QTPSVYDESGSTGGGDDSTPSI. Topologically, residues 48 to 82 are extracellular; the sequence is GYPGQVCANDSDTLELPDSSRALLLGWVPTRLVPA. A glycan (N-linked (GlcNAc...) asparagine) is linked at N56. Residues 83–103 traverse the membrane as a helical segment; the sequence is LYGLVLVVGLPANGLALWVLA. The Cytoplasmic portion of the chain corresponds to 104–108; that stretch reads TQAPR. A helical membrane pass occupies residues 109-129; that stretch reads LPSTMLLMNLAAADLLLALAL. At 130–151 the chain is on the extracellular side; it reads PPRIAYHLRGQRWPFGEAACRL. A disulfide bridge connects residues C149 and C228. A helical membrane pass occupies residues 152-172; that stretch reads ATAALYGHMYGSVLLLAAVSL. Topologically, residues 173–192 are cytoplasmic; that stretch reads DRYLALVHPLRARALRGRRL. A helical transmembrane segment spans residues 193 to 213; that stretch reads ALGLCMAAWLMAAALALPLTL. Topologically, residues 214–247 are extracellular; it reads QRQTFRLARSDRVLCHDALPLDAQASHWQPAFTC. The chain crosses the membrane as a helical span at residues 248 to 268; the sequence is LALLGCFLPLLAMLLCYGATL. Residues 269-283 lie on the Cytoplasmic side of the membrane; the sequence is HTLAASGRRYGHALR. The helical transmembrane segment at 284-304 threads the bilayer; the sequence is LTAVVLASAVAFFVPSNLLLL. The Extracellular segment spans residues 305-319; sequence LHYSDPSPSAWGNLY. Residues 320 to 343 form a helical membrane-spanning segment; that stretch reads GAYVPSLALSTLNSCVDPFIYYYV. Topologically, residues 344-385 are cytoplasmic; that stretch reads SAEFRDKVRAGLFQRSPGDTVASKASAEGGSRGMGTHSSLLQ. Positions 362–385 are disordered; that stretch reads DTVASKASAEGGSRGMGTHSSLLQ.

The protein belongs to the G-protein coupled receptor 1 family. A proteolytic cleavage generates a new N-terminus that functions as a tethered ligand. In terms of tissue distribution, widely expressed, with highest levels in lung, pancreas, thyroid, testis and small intestine. Not expressed in brain, kidney, spinal cord and peripheral blood leukocytes. Also detected in platelets.

Its subcellular location is the cell membrane. Its activity is regulated as follows. Activated upon interaction by mucunain, a cowhage (Mucuna pruriens) plant cysteine proteinase. Functionally, receptor for activated thrombin or trypsin coupled to G proteins that stimulate phosphoinositide hydrolysis. May play a role in platelets activation. This chain is Proteinase-activated receptor 4 (F2RL3), found in Homo sapiens (Human).